We begin with the raw amino-acid sequence, 369 residues long: Quinolinate synthase (369 aa).

2 residues coordinate iminosuccinate: histidine 47 and serine 64. Cysteine 111 contacts [4Fe-4S] cluster. Residues 142 to 144 and serine 163 contribute to the iminosuccinate site; that span reads YVN. Cysteine 231 is a binding site for [4Fe-4S] cluster. Iminosuccinate is bound by residues 257 to 259 and threonine 274; that span reads HPE. Cysteine 321 lines the [4Fe-4S] cluster pocket.

This sequence belongs to the quinolinate synthase family. Type 3 subfamily. [4Fe-4S] cluster is required as a cofactor.

The protein localises to the cytoplasm. The catalysed reaction is iminosuccinate + dihydroxyacetone phosphate = quinolinate + phosphate + 2 H2O + H(+). It functions in the pathway cofactor biosynthesis; NAD(+) biosynthesis; quinolinate from iminoaspartate: step 1/1. Catalyzes the condensation of iminoaspartate with dihydroxyacetone phosphate to form quinolinate. The polypeptide is Quinolinate synthase (Bacillus licheniformis (strain ATCC 14580 / DSM 13 / JCM 2505 / CCUG 7422 / NBRC 12200 / NCIMB 9375 / NCTC 10341 / NRRL NRS-1264 / Gibson 46)).